The sequence spans 424 residues: MAKNIQAIRGMNDYLPSETAIWQRIEGTLKNVLGSYGYSEIRLPIVEQTPLFKRAIGEVTDVVEKEMYTFEDRNGDSLTLRPEGTAGCVRAGIEHGLLYNQEQHLWYIGPMFRHERPQKGRYRQFHQLGCEVFGLQGPDIDAELIMLTARWWRALGISEHVTLELNSIGSLEARANYRDALVAFLEQHKEKLDEDCKRRMYTSPLRVLDSKNPEVQALLNDAPALGDYLDEESREHFAGLCKLLESAGIAYTVNQRLVRGLDYYNRTVFEWVTNSLGSQGTVCAGGRYDGLVEQLGGRATPAVGFAMGLERLVLLVQAVNPEFKADPVVDIYLVASGADTQSAAMALAERLRDELPGVKLMTNHGGGNFKKQFARADKWGARVAVVLGESEVANGTAVVKDLRSGEQTAVAQDSVAAHLRTLLG.

The protein belongs to the class-II aminoacyl-tRNA synthetase family. In terms of assembly, homodimer.

It is found in the cytoplasm. The catalysed reaction is tRNA(His) + L-histidine + ATP = L-histidyl-tRNA(His) + AMP + diphosphate + H(+). In Shigella dysenteriae serotype 1 (strain Sd197), this protein is Histidine--tRNA ligase.